The sequence spans 176 residues: Large ribosomal subunit protein eL20A (176 aa).

The protein belongs to the eukaryotic ribosomal protein eL20 family. As to quaternary structure, component of the large ribosomal subunit (LSU). Mature yeast ribosomes consist of a small (40S) and a large (60S) subunit. The 40S small subunit contains 1 molecule of ribosomal RNA (18S rRNA) and at least 33 different proteins. The large 60S subunit contains 3 rRNA molecules (25S, 5.8S and 5S rRNA) and at least 46 different proteins. eL20 forms multiple interactions with RNA and proteins in the central protuberance, connecting components of core functional centers that are located far apart.

The protein resides in the cytoplasm. Functionally, component of the ribosome, a large ribonucleoprotein complex responsible for the synthesis of proteins in the cell. The small ribosomal subunit (SSU) binds messenger RNAs (mRNAs) and translates the encoded message by selecting cognate aminoacyl-transfer RNA (tRNA) molecules. The large subunit (LSU) contains the ribosomal catalytic site termed the peptidyl transferase center (PTC), which catalyzes the formation of peptide bonds, thereby polymerizing the amino acids delivered by tRNAs into a polypeptide chain. The nascent polypeptides leave the ribosome through a tunnel in the LSU and interact with protein factors that function in enzymatic processing, targeting, and the membrane insertion of nascent chains at the exit of the ribosomal tunnel. In Schizosaccharomyces pombe (strain 972 / ATCC 24843) (Fission yeast), this protein is Large ribosomal subunit protein eL20A (rpl2001).